The primary structure comprises 167 residues: UPF0225 protein VP1145 (167 aa).

This sequence belongs to the UPF0225 family.

The sequence is that of UPF0225 protein VP1145 from Vibrio parahaemolyticus serotype O3:K6 (strain RIMD 2210633).